A 538-amino-acid chain; its full sequence is Syncytin-1 (538 aa).

The signal sequence occupies residues 1 to 20; sequence MALPYHIFLFTVLLPSFTLT. Over 21–443 the chain is Extracellular; the sequence is APPPCRCMTS…NTGPWGLLSQ (423 aa). N169 is a glycosylation site (N-linked (GlcNAc...) asparagine). A CXXC motif is present at residues 186-189; that stretch reads CWIC. 3 cysteine pairs are disulfide-bonded: C186–C189, C186–C405, and C397–C404. N208, N214, N234, N242, and N281 each carry an N-linked (GlcNAc...) asparagine glycan. The fusion peptide stretch occupies residues 320–340; sequence ILPFVIGAGVLGALGTGIGGI. Residues 380–396 are immunosuppression; that stretch reads LQNRRALDLLTAERGGT. The short motif at 397–405 is the CX6CC element; it reads CLFLGEECC. A glycan (N-linked (GlcNAc...) asparagine) is linked at N409. The chain crosses the membrane as a helical span at residues 444–464; that stretch reads WMPWILPFLGPLAAIILLLLF. The essential for the fusiogenic function stretch occupies residues 465-484; sequence GPCIFNLLVNFVSSRIEAVK. The Cytoplasmic segment spans residues 465–538; the sequence is GPCIFNLLVN…LLRPNSAGSS (74 aa). The tract at residues 496–538 is disordered; that stretch reads KIYRRPLDRPASPRSDVNDIKGTPPEEILTAQPLLRPNSAGSS.

The protein belongs to the gamma type-C retroviral envelope protein family. HERV class-I W env subfamily. In terms of assembly, the mature envelope protein (Env) consists of a trimer of SU-TM heterodimers attached probably by a labile interchain disulfide bond. Interacts with the C-type lectin CD209/DC-SIGN. In terms of processing, specific enzymatic cleavages in vivo yield mature proteins. Envelope glycoproteins are synthesized as an inactive precursor that is heavily N-glycosylated and processed likely by furin in the Golgi to yield the mature SU and TM proteins. The cleavage site between SU and TM requires the minimal sequence [KR]-X-[KR]-R. Post-translationally, the CXXC motif is highly conserved across a broad range of retroviral envelope proteins. It is thought to participate in the formation of a labile disulfide bond possibly with the CX6CC motif present in the transmembrane protein.

It localises to the cell membrane. The protein localises to the virion. This endogenous retroviral envelope protein has retained its original fusogenic properties and participates in trophoblast fusion and the formation of a syncytium during placenta morphogenesis. May recognize and induce fusion through binding of SLC1A4 and SLC1A5. Its function is as follows. Endogenous envelope proteins may have kept, lost or modified their original function during evolution. Retroviral envelope proteins mediate receptor recognition and membrane fusion during early infection. The surface protein (SU) mediates receptor recognition, while the transmembrane protein (TM) acts as a class I viral fusion protein. The protein may have at least 3 conformational states: pre-fusion native state, pre-hairpin intermediate state, and post-fusion hairpin state. During viral and target cell membrane fusion, the coiled coil regions (heptad repeats) assume a trimer-of-hairpins structure, positioning the fusion peptide in close proximity to the C-terminal region of the ectodomain. The formation of this structure appears to drive apposition and subsequent fusion of membranes. The chain is Syncytin-1 (ERVW-1) from Pan troglodytes (Chimpanzee).